The chain runs to 439 residues: tRNA(Ile)-lysidine synthase (439 aa).

ATP is bound at residue 23–28; the sequence is SGGLDS.

Belongs to the tRNA(Ile)-lysidine synthase family.

Its subcellular location is the cytoplasm. It carries out the reaction cytidine(34) in tRNA(Ile2) + L-lysine + ATP = lysidine(34) in tRNA(Ile2) + AMP + diphosphate + H(+). Its function is as follows. Ligates lysine onto the cytidine present at position 34 of the AUA codon-specific tRNA(Ile) that contains the anticodon CAU, in an ATP-dependent manner. Cytidine is converted to lysidine, thus changing the amino acid specificity of the tRNA from methionine to isoleucine. The chain is tRNA(Ile)-lysidine synthase from Methylococcus capsulatus (strain ATCC 33009 / NCIMB 11132 / Bath).